The chain runs to 142 residues: Semaphorin-like protein VACWR164 (142 aa).

Residues 1–142 (MNTIKQSFST…MPQMKKILKM (142 aa)) enclose the Sema domain.

The protein belongs to the semaphorin family.

This Bos taurus (Bovine) protein is Semaphorin-like protein VACWR164.